Reading from the N-terminus, the 114-residue chain is Large ribosomal subunit protein P2 (114 aa).

The span at 76–91 shows a compositional bias: low complexity; that stretch reads PAAAAAAGGGDSSSAA. Residues 76–114 are disordered; sequence PAAAAAAGGGDSSSAAKETKKEEPEEEEEDGDMGLSLFD.

Belongs to the eukaryotic ribosomal protein P1/P2 family. As to quaternary structure, P1 and P2 exist as dimers at the large ribosomal subunit. Phosphorylated.

Plays an important role in the elongation step of protein synthesis. In Eimeria tenella (Coccidian parasite), this protein is Large ribosomal subunit protein P2.